The primary structure comprises 119 residues: Large ribosomal subunit protein uL18 (119 aa).

It belongs to the universal ribosomal protein uL18 family. Part of the 50S ribosomal subunit; part of the 5S rRNA/L5/L18/L25 subcomplex. Contacts the 5S and 23S rRNAs.

Functionally, this is one of the proteins that bind and probably mediate the attachment of the 5S RNA into the large ribosomal subunit, where it forms part of the central protuberance. This chain is Large ribosomal subunit protein uL18, found in Cupriavidus taiwanensis (strain DSM 17343 / BCRC 17206 / CCUG 44338 / CIP 107171 / LMG 19424 / R1) (Ralstonia taiwanensis (strain LMG 19424)).